Here is a 520-residue protein sequence, read N- to C-terminus: Type I restriction enzyme EcoprrI methylase subunit (520 aa).

S-adenosyl-L-methionine contacts are provided by residues 198–203 (EFFTPQ), 230–232 (SGS), and glutamate 254.

The protein belongs to the N(4)/N(6)-methyltransferase family. The type I restriction/modification system is composed of three polypeptides R, M and S; the restriction enzyme has stoichiometry R(2)M(2)S(1) while the methyltransferase is M(2)S(1).

The catalysed reaction is a 2'-deoxyadenosine in DNA + S-adenosyl-L-methionine = an N(6)-methyl-2'-deoxyadenosine in DNA + S-adenosyl-L-homocysteine + H(+). Functionally, the subtype gamma methyltransferase (M) subunit of a type I restriction enzyme. The M and S subunits together form a methyltransferase (MTase) that methylates two adenine residues of the sequence 5'-CCAN(7)ATGC-3'. In the presence of the R subunit the complex can also act as an endonuclease, binding to the same target sequence but cutting the DNA some distance from this site. Whether the DNA is cut or modified depends on the methylation state of the target sequence. When the target site is unmodified, the DNA is cut. When the target site is hemimethylated, the complex acts as a maintenance MTase modifying the DNA so that both strands become methylated. After locating a non-methylated recognition site, the enzyme complex serves as a molecular motor that translocates DNA in an ATP-dependent manner until a collision occurs that triggers cleavage. The protein is Type I restriction enzyme EcoprrI methylase subunit of Escherichia coli.